The sequence spans 116 residues: UPF0102 protein Neut_1662 (116 aa).

It belongs to the UPF0102 family.

This is UPF0102 protein Neut_1662 from Nitrosomonas eutropha (strain DSM 101675 / C91 / Nm57).